A 274-amino-acid polypeptide reads, in one-letter code: MQQLQSIIESAFENRATLTPATVNHETRDAVTQVINLLDSGKLRVAEKIDGQWVTHQWLKMAVLLSFRINENQIIDGTESRYFDKVPMKFSDYDQTRFEKEGFRVVPPAAARQGAFIARNCVLMPSYVNIGAYVDEGTMVDTWTTVGSCAQIGKNVHLSGGVGIGGVLEPLQANPTIIEDNCFIGARSEIVEGVIIEEGSVISMGVYIGQSTKIYDRETGEIHYGRVPAGSVVVSGNLPSKDGSYSLYCAVIVKKVDAKTQGKVGINELLRSID.

Residues Arg-104 and Asp-141 each contribute to the substrate site.

The protein belongs to the transferase hexapeptide repeat family. As to quaternary structure, homotrimer.

The protein resides in the cytoplasm. It carries out the reaction (S)-2,3,4,5-tetrahydrodipicolinate + succinyl-CoA + H2O = (S)-2-succinylamino-6-oxoheptanedioate + CoA. It participates in amino-acid biosynthesis; L-lysine biosynthesis via DAP pathway; LL-2,6-diaminopimelate from (S)-tetrahydrodipicolinate (succinylase route): step 1/3. This Photorhabdus laumondii subsp. laumondii (strain DSM 15139 / CIP 105565 / TT01) (Photorhabdus luminescens subsp. laumondii) protein is 2,3,4,5-tetrahydropyridine-2,6-dicarboxylate N-succinyltransferase.